Here is a 242-residue protein sequence, read N- to C-terminus: Thaumatin-like protein 2 (242 aa).

An N-terminal signal peptide occupies residues 1 to 23 (MMKTLGAVLSLSLTLLSFGGAHA). Cystine bridges form between Cys32/Cys241, Cys77/Cys87, Cys92/Cys99, Cys147/Cys230, Cys152/Cys213, Cys160/Cys176, Cys180/Cys189, and Cys190/Cys200.

Belongs to the thaumatin family. In terms of tissue distribution, preferentially expressed in the abscission zone of fruit. Also expressed in leaf abscission zone.

The protein localises to the secreted. In terms of biological role, may be involved in protecting plant tissues from pathogen infection. This chain is Thaumatin-like protein 2, found in Prunus persica (Peach).